Reading from the N-terminus, the 153-residue chain is Small ribosomal subunit protein uS19 (153 aa).

The unknown stretch occupies residues 1–63 (MGFRGAWNKR…QEIWDEFRAF (63 aa)). The tract at residues 64–153 (VNKKAWVDPK…EKSAKVVKKK (90 aa)) is small ribosomal subunit protein uS19.

Belongs to the universal ribosomal protein uS19 family.

In terms of biological role, protein S19 forms a complex with S13 that binds strongly to the 16S ribosomal RNA. This Hydrogenobaculum sp. (strain Y04AAS1) protein is Small ribosomal subunit protein uS19.